Reading from the N-terminus, the 441-residue chain is Chitinase-like protein Idgf3 (441 aa).

Positions 1–23 (MSGSLWLSLALSLAVLAQFKVSA) are cleaved as a signal peptide. The GH18 domain maps to 25–441 (PNLVCFYDSQ…MLRAIKYRLL (417 aa)). A disulfide bond links Cys29 and Cys56. N-linked (GlcNAc...) asparagine glycosylation occurs at Asn221. The segment at 310 to 331 (GDSGMPVVSSTQGPAPAGPQSK) is disordered. The cysteines at positions 342 and 425 are disulfide-linked.

It belongs to the glycosyl hydrolase 18 family. IDGF subfamily. Glycosylated.

It localises to the secreted. Functionally, cooperates with insulin-like peptides to stimulate the proliferation, polarization and motility of imaginal disk cells. May act by stabilizing the binding of insulin-like peptides to its receptor through a simultaneous interaction with both molecules to form a multiprotein signaling complex. The protein is Chitinase-like protein Idgf3 (Idgf3) of Drosophila simulans (Fruit fly).